Consider the following 319-residue polypeptide: Acetyl-coenzyme A carboxylase carboxyl transferase subunit alpha (319 aa).

The region spanning 32-293 (NVDTEVRALE…KAVLLNELEA (262 aa)) is the CoA carboxyltransferase C-terminal domain.

This sequence belongs to the AccA family. In terms of assembly, acetyl-CoA carboxylase is a heterohexamer composed of biotin carboxyl carrier protein (AccB), biotin carboxylase (AccC) and two subunits each of ACCase subunit alpha (AccA) and ACCase subunit beta (AccD).

Its subcellular location is the cytoplasm. The enzyme catalyses N(6)-carboxybiotinyl-L-lysyl-[protein] + acetyl-CoA = N(6)-biotinyl-L-lysyl-[protein] + malonyl-CoA. The protein operates within lipid metabolism; malonyl-CoA biosynthesis; malonyl-CoA from acetyl-CoA: step 1/1. In terms of biological role, component of the acetyl coenzyme A carboxylase (ACC) complex. First, biotin carboxylase catalyzes the carboxylation of biotin on its carrier protein (BCCP) and then the CO(2) group is transferred by the carboxyltransferase to acetyl-CoA to form malonyl-CoA. The chain is Acetyl-coenzyme A carboxylase carboxyl transferase subunit alpha from Xylella fastidiosa (strain M12).